A 216-amino-acid polypeptide reads, in one-letter code: Urease accessory protein UreG (216 aa).

A GTP-binding site is contributed by 25–32 (GPVGSGKT).

It belongs to the SIMIBI class G3E GTPase family. UreG subfamily. In terms of assembly, homodimer. UreD, UreF and UreG form a complex that acts as a GTP-hydrolysis-dependent molecular chaperone, activating the urease apoprotein by helping to assemble the nickel containing metallocenter of UreC. The UreE protein probably delivers the nickel.

The protein localises to the cytoplasm. In terms of biological role, facilitates the functional incorporation of the urease nickel metallocenter. This process requires GTP hydrolysis, probably effectuated by UreG. This Burkholderia pseudomallei (strain 1710b) protein is Urease accessory protein UreG.